A 170-amino-acid polypeptide reads, in one-letter code: Protein HemX (170 aa).

Residues 1–17 show a composition bias toward polar residues; it reads MTEQKNTNENDLQNGTS. The disordered stretch occupies residues 1 to 24; the sequence is MTEQKNTNENDLQNGTSKADDDIR. A helical transmembrane segment spans residues 37 to 57; that stretch reads GLIGSAVAILVILAIGGGLYY.

The protein localises to the cell membrane. This is Protein HemX from Proteus mirabilis.